The sequence spans 316 residues: Probable cell division protein WhiA (316 aa).

The H-T-H motif DNA-binding region spans 275–309; sequence TLKELGEMVSGGKISKSGINHRLRKIDEIAEKLRA.

The protein belongs to the WhiA family.

Involved in cell division and chromosome segregation. The protein is Probable cell division protein WhiA of Bacillus cereus (strain B4264).